Here is a 246-residue protein sequence, read N- to C-terminus: 1-(5-phosphoribosyl)-5-[(5-phosphoribosylamino)methylideneamino] imidazole-4-carboxamide isomerase (246 aa).

Asp-12 acts as the Proton acceptor in catalysis. The active-site Proton donor is Asp-134.

This sequence belongs to the HisA/HisF family.

The protein localises to the cytoplasm. The enzyme catalyses 1-(5-phospho-beta-D-ribosyl)-5-[(5-phospho-beta-D-ribosylamino)methylideneamino]imidazole-4-carboxamide = 5-[(5-phospho-1-deoxy-D-ribulos-1-ylimino)methylamino]-1-(5-phospho-beta-D-ribosyl)imidazole-4-carboxamide. It functions in the pathway amino-acid biosynthesis; L-histidine biosynthesis; L-histidine from 5-phospho-alpha-D-ribose 1-diphosphate: step 4/9. This chain is 1-(5-phosphoribosyl)-5-[(5-phosphoribosylamino)methylideneamino] imidazole-4-carboxamide isomerase, found in Psychrobacter cryohalolentis (strain ATCC BAA-1226 / DSM 17306 / VKM B-2378 / K5).